We begin with the raw amino-acid sequence, 1372 residues long: Putative Polyprotein CP (1372 aa).

Coiled-coil stretches lie at residues 126–153 and 299–350; these read NKEN…LKNI and EKQK…EELD. The interval 372 to 398 is disordered; sequence SESSEINEISDNETEQISGSDSDYNNE. A compositionally biased stretch (polar residues) spans 386-398; it reads EQISGSDSDYNNE. The CCHC-type zinc-finger motif lies at 739 to 756; sequence CKCYNCGEEGHISPNCKK. A coiled-coil region spans residues 1162 to 1189; it reads DDRTNIQREKDQIEKADHNLELQKELNN.

The protein localises to the virion. The polypeptide is Putative Polyprotein CP (Cassava vein mosaic virus (CsVMV)).